Consider the following 384-residue polypeptide: Lipid-A-disaccharide synthase (384 aa).

The protein belongs to the LpxB family.

The catalysed reaction is a lipid X + a UDP-2-N,3-O-bis[(3R)-3-hydroxyacyl]-alpha-D-glucosamine = a lipid A disaccharide + UDP + H(+). It functions in the pathway bacterial outer membrane biogenesis; LPS lipid A biosynthesis. Its function is as follows. Condensation of UDP-2,3-diacylglucosamine and 2,3-diacylglucosamine-1-phosphate to form lipid A disaccharide, a precursor of lipid A, a phosphorylated glycolipid that anchors the lipopolysaccharide to the outer membrane of the cell. The chain is Lipid-A-disaccharide synthase from Neisseria meningitidis serogroup C / serotype 2a (strain ATCC 700532 / DSM 15464 / FAM18).